A 387-amino-acid chain; its full sequence is Exodeoxyribonuclease 7 large subunit (387 aa).

It belongs to the XseA family. In terms of assembly, heterooligomer composed of large and small subunits.

The protein resides in the cytoplasm. It carries out the reaction Exonucleolytic cleavage in either 5'- to 3'- or 3'- to 5'-direction to yield nucleoside 5'-phosphates.. Its function is as follows. Bidirectionally degrades single-stranded DNA into large acid-insoluble oligonucleotides, which are then degraded further into small acid-soluble oligonucleotides. In Campylobacter jejuni (strain RM1221), this protein is Exodeoxyribonuclease 7 large subunit.